Consider the following 504-residue polypeptide: Maturase K (504 aa).

The protein belongs to the intron maturase 2 family. MatK subfamily.

The protein localises to the plastid. It is found in the chloroplast. Usually encoded in the trnK tRNA gene intron. Probably assists in splicing its own and other chloroplast group II introns. The sequence is that of Maturase K from Turritis glabra (Tower mustard).